The primary structure comprises 180 residues: ATP-dependent protease subunit HslV (180 aa).

Residue Thr8 is part of the active site. Gly165, Cys168, and Thr171 together coordinate Na(+).

It belongs to the peptidase T1B family. HslV subfamily. A double ring-shaped homohexamer of HslV is capped on each side by a ring-shaped HslU homohexamer. The assembly of the HslU/HslV complex is dependent on binding of ATP.

Its subcellular location is the cytoplasm. It catalyses the reaction ATP-dependent cleavage of peptide bonds with broad specificity.. Its activity is regulated as follows. Allosterically activated by HslU binding. Protease subunit of a proteasome-like degradation complex believed to be a general protein degrading machinery. The chain is ATP-dependent protease subunit HslV from Halalkalibacterium halodurans (strain ATCC BAA-125 / DSM 18197 / FERM 7344 / JCM 9153 / C-125) (Bacillus halodurans).